The primary structure comprises 181 residues: Monofunctional chorismate mutase (181 aa).

An N-terminal signal peptide occupies residues 1–20; that stretch reads MIRHIAIFLCSLLMCSTTFA. The 82-residue stretch at 21–102 folds into the Chorismate mutase domain; that stretch reads DSVTSVSLGA…ASKAIQYRYL (82 aa). Substrate-binding residues include Arg-38, Lys-49, Asp-58, Glu-62, and Gln-98.

The protein localises to the periplasm. The catalysed reaction is chorismate = prephenate. It functions in the pathway metabolic intermediate biosynthesis; prephenate biosynthesis; prephenate from chorismate: step 1/1. Functionally, catalyzes the Claisen rearrangement of chorismate to prephenate. The protein is Monofunctional chorismate mutase of Salmonella typhimurium.